Consider the following 436-residue polypeptide: AMSH-like protease (436 aa).

N-acetylmethionine is present on Met-1. Ser-25 and Ser-242 each carry phosphoserine. The 129-residue stretch at 269-397 (VVLPEDLCHK…IFRLTNAGML (129 aa)) folds into the MPN domain. Positions 347, 349, 360, 362, 402, 408, and 410 each coordinate Zn(2+). Residues 347–360 (HTHPTQTAFLSSVD) carry the JAMM motif motif.

This sequence belongs to the peptidase M67C family. Zn(2+) is required as a cofactor. In terms of tissue distribution, ubiquitously expressed.

Its activity is regulated as follows. Inhibited by UbV(SP.1), an ubiquitin variant that also inhibits STAMBP. Its function is as follows. Zinc metalloprotease that specifically cleaves 'Lys-63'-linked polyubiquitin chains. Acts as a positive regulator of the TORC1 signaling pathway by mediating 'Lys-63'-linked deubiquitination of SESN2, thereby inhibiting SESN2-interaction with the GATOR2 complex. Does not cleave 'Lys-48'-linked polyubiquitin chains. This chain is AMSH-like protease, found in Homo sapiens (Human).